The primary structure comprises 674 residues: Kelch repeat and BTB domain-containing protein 6 (674 aa).

The tract at residues 1–28 is disordered; that stretch reads MQSREDAPRSRRLASPRGGKRPKKIHKP. Over residues 10–27 the composition is skewed to basic residues; the sequence is SRRLASPRGGKRPKKIHK. The BTB domain occupies 63-138; sequence CDVTIEVVTP…CYTGRVSLSE (76 aa). Kelch repeat units lie at residues 386–435, 436–484, 486–523, 524–564, 567–616, and 642–673; these read AVCI…YLNG, YIYI…VIRD, LYALNSKRMFCYDPSHNMWLKCVSLKRNDFQEACVFNE, EIYC…IIKH, KLLL…CLSA, and TEWDLGGFSEPDSESGSSSSLSDDDFWVRVAP. Residues 631–674 are disordered; the sequence is TEEEEIPSESSTEWDLGGFSEPDSESGSSSSLSDDDFWVRVAPQ. The ATG8 interaction motif (AIM) signature appears at 668-671; it reads WVRV.

Core component of a BCR3 (BTB-CUL3-RBX1) E3 ubiquitin ligase complex, also named Cul3-RING ubiquitin ligase complex CUL3(KBTBD6/7), composed of CUL3, RBX1, KBTBD6 and KBTBD7. Interacts with GABARAP; the interaction is direct and is required for the ubiquitination of TIAM1. Interacts with GABARAPL1, GABARAPL2 and MAP1LC3B; the interaction is direct.

It is found in the cytoplasm. Its subcellular location is the nucleus. The protein operates within protein modification; protein ubiquitination. As part of the CUL3(KBTBD6/7) E3 ubiquitin ligase complex functions as a substrate adapter for the RAC1 guanine exchange factor (GEF) TIAM1, mediating its 'Lys-48' ubiquitination and proteasomal degradation. By controlling this ubiquitination, regulates RAC1 signal transduction and downstream biological processes including the organization of the cytoskeleton, cell migration and cell proliferation. Ubiquitination of TIAM1 requires the membrane-associated protein GABARAP which may restrict locally the activity of the complex. The polypeptide is Kelch repeat and BTB domain-containing protein 6 (Homo sapiens (Human)).